We begin with the raw amino-acid sequence, 82 residues long: Sec-independent protein translocase protein TatA (82 aa).

The chain crosses the membrane as a helical span at residues 1–21 (MGSFSIWHWLIVLLVVVMIFG). A disordered region spans residues 39-82 (FKDGMKDGSTTDAPAASSAPAAQVTGQPANSDKSTIDVEARQKS). Low complexity predominate over residues 51 to 60 (APAASSAPAA). Residues 62 to 71 (VTGQPANSDK) show a composition bias toward polar residues. Over residues 72–82 (STIDVEARQKS) the composition is skewed to basic and acidic residues.

It belongs to the TatA/E family. In terms of assembly, the Tat system comprises two distinct complexes: a TatABC complex, containing multiple copies of TatA, TatB and TatC subunits, and a separate TatA complex, containing only TatA subunits. Substrates initially bind to the TatABC complex, which probably triggers association of the separate TatA complex to form the active translocon.

It localises to the cell inner membrane. Part of the twin-arginine translocation (Tat) system that transports large folded proteins containing a characteristic twin-arginine motif in their signal peptide across membranes. TatA could form the protein-conducting channel of the Tat system. This chain is Sec-independent protein translocase protein TatA, found in Variovorax paradoxus (strain S110).